We begin with the raw amino-acid sequence, 292 residues long: 1,4-dihydroxy-2-naphthoate octaprenyltransferase (292 aa).

6 helical membrane passes run 35–55 (AAVWWKALLALAVAVALVIGV), 101–121 (ALAGLVLALLSAPWLIAVGAI), 137–157 (GYAGFGELAVFVFFGPVAVLG), 166–186 (VDWVGLAQAVATGALSCSVLV), 220–240 (LLAVAGVLTFVLMLATPWCVV), and 271–291 (TGLAMLVWALAVAGALAFGQL).

It belongs to the MenA family. Type 1 subfamily. It depends on Mg(2+) as a cofactor.

It is found in the cell membrane. The enzyme catalyses an all-trans-polyprenyl diphosphate + 1,4-dihydroxy-2-naphthoate + H(+) = a 2-demethylmenaquinol + CO2 + diphosphate. The protein operates within quinol/quinone metabolism; menaquinone biosynthesis; menaquinol from 1,4-dihydroxy-2-naphthoate: step 1/2. With respect to regulation, activity is abolished by EDTA. Inhibited by Ro 48-8071, which is non-competitive with regard to DHNA and competitive with regard to the isoprenyldiphosphate substrate. Its function is as follows. Conversion of 1,4-dihydroxy-2-naphthoate (DHNA) to demethylmenaquinone (DMK). Can use a variety of allylic isoprenyl diphosphates as substrates but has a requirement for at least three isoprene units. This is 1,4-dihydroxy-2-naphthoate octaprenyltransferase from Mycobacterium tuberculosis (strain ATCC 25618 / H37Rv).